Consider the following 261-residue polypeptide: 3-methyl-2-oxobutanoate hydroxymethyltransferase (261 aa).

2 residues coordinate Mg(2+): aspartate 44 and aspartate 83. 3-methyl-2-oxobutanoate-binding positions include 44–45 (DS), aspartate 83, and lysine 112. Glutamate 114 contributes to the Mg(2+) binding site. Residue glutamate 181 is the Proton acceptor of the active site.

The protein belongs to the PanB family. Homodecamer; pentamer of dimers. Mg(2+) serves as cofactor.

It is found in the cytoplasm. The catalysed reaction is 3-methyl-2-oxobutanoate + (6R)-5,10-methylene-5,6,7,8-tetrahydrofolate + H2O = 2-dehydropantoate + (6S)-5,6,7,8-tetrahydrofolate. It participates in cofactor biosynthesis; (R)-pantothenate biosynthesis; (R)-pantoate from 3-methyl-2-oxobutanoate: step 1/2. Its function is as follows. Catalyzes the reversible reaction in which hydroxymethyl group from 5,10-methylenetetrahydrofolate is transferred onto alpha-ketoisovalerate to form ketopantoate. The protein is 3-methyl-2-oxobutanoate hydroxymethyltransferase of Acidithiobacillus ferrooxidans (strain ATCC 23270 / DSM 14882 / CIP 104768 / NCIMB 8455) (Ferrobacillus ferrooxidans (strain ATCC 23270)).